A 334-amino-acid chain; its full sequence is Nucleoid-associated protein VS_0951 (334 aa).

Belongs to the YejK family.

The protein resides in the cytoplasm. It localises to the nucleoid. This is Nucleoid-associated protein VS_0951 from Vibrio atlanticus (strain LGP32) (Vibrio splendidus (strain Mel32)).